The chain runs to 429 residues: Phosphoribosylamine--glycine ligase (429 aa).

An ATP-grasp domain is found at 109-316 (KDFLARHNIP…LVELCLAACE (208 aa)). 135 to 196 (LREKGAPIVI…EEFLDGEEAS (62 aa)) is a binding site for ATP. The segment at 212–236 (SQDHKRVGDKDTGPNTGGMGAYSPA) is disordered. The segment covering 213–223 (QDHKRVGDKDT) has biased composition (basic and acidic residues). Positions 286 and 288 each coordinate Mg(2+).

Belongs to the GARS family. As to quaternary structure, monomer. The cofactor is Mg(2+). Requires Mn(2+) as cofactor.

It carries out the reaction 5-phospho-beta-D-ribosylamine + glycine + ATP = N(1)-(5-phospho-beta-D-ribosyl)glycinamide + ADP + phosphate + H(+). Its pathway is purine metabolism; IMP biosynthesis via de novo pathway; N(1)-(5-phospho-D-ribosyl)glycinamide from 5-phospho-alpha-D-ribose 1-diphosphate: step 2/2. This Escherichia coli O6:H1 (strain CFT073 / ATCC 700928 / UPEC) protein is Phosphoribosylamine--glycine ligase.